A 243-amino-acid polypeptide reads, in one-letter code: MTNSSLRPSGRRADQLRDVRITRHYTKHAEGAVLVEFGDTKVICTASVAERVPEFLRERGQGWLTAEYGMLPRATHTRSDREAARGKQTGRTQEIQRLIGRALRAVFDLNALGPRTLHLDCDVIQADGGTRTASITGAFVAAHDAVTKLVAAGRIARSPITDYVAAISVGVFGGTPVLDLDYDEDSACDTDMNVVMTGAGGFVEVQGTAEGAPFSRTEMNALLDLAQAGIGELVRLQRAALEA.

Phosphate is bound by residues R91 and 129-131 (GTR).

This sequence belongs to the RNase PH family. As to quaternary structure, homohexameric ring arranged as a trimer of dimers.

It carries out the reaction tRNA(n+1) + phosphate = tRNA(n) + a ribonucleoside 5'-diphosphate. Functionally, phosphorolytic 3'-5' exoribonuclease that plays an important role in tRNA 3'-end maturation. Removes nucleotide residues following the 3'-CCA terminus of tRNAs; can also add nucleotides to the ends of RNA molecules by using nucleoside diphosphates as substrates, but this may not be physiologically important. Probably plays a role in initiation of 16S rRNA degradation (leading to ribosome degradation) during starvation. This chain is Ribonuclease PH, found in Burkholderia mallei (strain NCTC 10247).